A 328-amino-acid chain; its full sequence is Putative GDP-L-fucose synthase 2 (328 aa).

An N-acetylalanine modification is found at Ala-2. An NADP(+)-binding site is contributed by 26–32; the sequence is GHRGLVG. The active-site Proton donor/acceptor is the Tyr-152. Residues Lys-156, 179 to 182, and His-195 contribute to the NADP(+) site; that span reads PTNL. Residues Arg-203, Trp-218, Arg-225, and Asp-285 each coordinate substrate.

Belongs to the NAD(P)-dependent epimerase/dehydratase family. Fucose synthase subfamily. In terms of assembly, homodimer.

It carries out the reaction GDP-beta-L-fucose + NADP(+) = GDP-4-dehydro-alpha-D-rhamnose + NADPH + H(+). Its pathway is nucleotide-sugar biosynthesis; GDP-L-fucose biosynthesis via de novo pathway; GDP-L-fucose from GDP-alpha-D-mannose: step 2/2. In terms of biological role, catalyzes the two-step NADP-dependent conversion of GDP-4-dehydro-6-deoxy-D-mannose to GDP-fucose, involving an epimerase and a reductase reaction. The sequence is that of Putative GDP-L-fucose synthase 2 (GER2) from Arabidopsis thaliana (Mouse-ear cress).